The following is a 188-amino-acid chain: Adenylate kinase (188 aa).

10 to 15 (GCGKGT) is an ATP binding site. The segment at 30 to 59 (STGDMLRHARAAGTELGRRVAAIMDGGNLV) is NMP. AMP is bound by residues Thr-31, Arg-36, 57–59 (NLV), 85–88 (GFPR), and Gln-92. An LID region spans residues 126-136 (KRAEEEGRPDD). Arg-127 serves as a coordination point for ATP. AMP-binding residues include Arg-133 and Arg-144. An ATP-binding site is contributed by Gly-172.

Belongs to the adenylate kinase family. In terms of assembly, monomer.

The protein resides in the cytoplasm. It catalyses the reaction AMP + ATP = 2 ADP. The protein operates within purine metabolism; AMP biosynthesis via salvage pathway; AMP from ADP: step 1/1. Its function is as follows. Catalyzes the reversible transfer of the terminal phosphate group between ATP and AMP. Plays an important role in cellular energy homeostasis and in adenine nucleotide metabolism. The sequence is that of Adenylate kinase from Maricaulis maris (strain MCS10) (Caulobacter maris).